The primary structure comprises 214 residues: Adenylate kinase (214 aa).

Residue glycine 10–threonine 15 coordinates ATP. The NMP stretch occupies residues serine 30–valine 59. Residues threonine 31, arginine 36, glutamate 57 to valine 59, glycine 85 to arginine 88, and glutamine 92 each bind AMP. The segment at glycine 122–aspartate 159 is LID. ATP-binding positions include arginine 123 and isoleucine 132–tyrosine 133. Arginine 156 and arginine 167 together coordinate AMP. Glutamine 200 provides a ligand contact to ATP.

The protein belongs to the adenylate kinase family. In terms of assembly, monomer.

It is found in the cytoplasm. It carries out the reaction AMP + ATP = 2 ADP. It functions in the pathway purine metabolism; AMP biosynthesis via salvage pathway; AMP from ADP: step 1/1. Functionally, catalyzes the reversible transfer of the terminal phosphate group between ATP and AMP. Plays an important role in cellular energy homeostasis and in adenine nucleotide metabolism. The protein is Adenylate kinase of Buchnera aphidicola subsp. Schizaphis graminum (strain Sg).